The primary structure comprises 360 residues: Histidinol-phosphate aminotransferase (360 aa).

K223 is subject to N6-(pyridoxal phosphate)lysine.

It belongs to the class-II pyridoxal-phosphate-dependent aminotransferase family. Histidinol-phosphate aminotransferase subfamily. As to quaternary structure, homodimer. The cofactor is pyridoxal 5'-phosphate.

The enzyme catalyses L-histidinol phosphate + 2-oxoglutarate = 3-(imidazol-4-yl)-2-oxopropyl phosphate + L-glutamate. It functions in the pathway amino-acid biosynthesis; L-histidine biosynthesis; L-histidine from 5-phospho-alpha-D-ribose 1-diphosphate: step 7/9. The chain is Histidinol-phosphate aminotransferase from Bacillus subtilis subsp. natto.